Reading from the N-terminus, the 295-residue chain is Protoheme IX farnesyltransferase (295 aa).

The next 9 membrane-spanning stretches (helical) occupy residues 9-29 (ITKPGIIFGNVLSVAGGFFLA), 36-56 (FGVFLAAVIGTSLVVASGCVF), 80-100 (LVSLKLALLYATLLGIAGVAL), 108-128 (LAALFAVIGFVIYVGFYSLYL), 135-155 (GTLVGSLSGAMPPVIGYCAVS), 163-183 (LTLLVMFSLWQMPHSYAIAIF), 209-229 (ILLYILAFLVATLMLTVGGYA), 230-250 (GLNYLAVAAGMGMYWLYMAWK), and 265-285 (FVFSIFTITALSVMMSVDFQV).

This sequence belongs to the UbiA prenyltransferase family. Protoheme IX farnesyltransferase subfamily.

The protein localises to the cell inner membrane. The enzyme catalyses heme b + (2E,6E)-farnesyl diphosphate + H2O = Fe(II)-heme o + diphosphate. Its pathway is porphyrin-containing compound metabolism; heme O biosynthesis; heme O from protoheme: step 1/1. Functionally, converts heme B (protoheme IX) to heme O by substitution of the vinyl group on carbon 2 of heme B porphyrin ring with a hydroxyethyl farnesyl side group. The sequence is that of Protoheme IX farnesyltransferase from Pseudomonas syringae pv. tomato (strain ATCC BAA-871 / DC3000).